The sequence spans 266 residues: GATA zinc finger domain-containing protein 1 (266 aa).

The segment at 9-33 (CSMCKTTSSSMWKKSPQGEILCHHC) adopts a GATA-type zinc-finger fold. Positions 59 to 72 (TTTFATTSAGPSQS) are enriched in low complexity. The interval 59 to 112 (TTTFATTSAGPSQSNGGGGGKQSKQEIHRRSARLRNTKYKSAPAAEKKVSTKGK) is disordered. Residue K259 forms a Glycyl lysine isopeptide (Lys-Gly) (interchain with G-Cter in SUMO2) linkage.

As to quaternary structure, component of a chromatin complex, at least composed of KDM5A, GATAD1 and EMSY. As to expression, expressed in the eye (lens, ciliary body, retina, sclera and conjunctiva) at postnatal day 2 and 10. Not detected anywhere at postnatal day 14.

The protein resides in the nucleus. Functionally, component of some chromatin complex recruited to chromatin sites methylated 'Lys-4' of histone H3 (H3K4me), with a preference for trimethylated form (H3K4me3). This Mus musculus (Mouse) protein is GATA zinc finger domain-containing protein 1 (Gatad1).